The chain runs to 188 residues: Gamma-glutamylcyclotransferase (188 aa).

19 to 22 (YFAY) provides a ligand contact to substrate. Residue E98 is the Proton acceptor of the active site. At S173 the chain carries Phosphoserine.

This sequence belongs to the gamma-glutamylcyclotransferase family. As to quaternary structure, homodimer.

The enzyme catalyses an alpha-(gamma-L-glutamyl)-L-amino acid = 5-oxo-L-proline + an L-alpha-amino acid. Functionally, catalyzes the formation of 5-oxoproline from gamma-glutamyl dipeptides and may play a significant role in glutathione homeostasis. Induces release of cytochrome c from mitochondria with resultant induction of apoptosis. The protein is Gamma-glutamylcyclotransferase (Ggct) of Mus musculus (Mouse).